Here is a 402-residue protein sequence, read N- to C-terminus: Putative RNA-guided DNA endonuclease (402 aa).

The active site involves aspartate 188. The interval 202-239 is disordered; the sequence is KITNPKHERRDRARLAKAQRDVSRKAKGSANRKKARRK. Residues 204 to 225 show a composition bias toward basic and acidic residues; that stretch reads TNPKHERRDRARLAKAQRDVSR. Basic residues predominate over residues 226–239; the sequence is KAKGSANRKKARRK. Glutamate 272 is an active-site residue. The Zn(2+) site is built by cysteine 325, cysteine 328, cysteine 344, and cysteine 346. Aspartate 353 is an active-site residue. A disordered region spans residues 373–402; sequence GIRPQRESSRTGRSSVKQEPQRATAGIPRL.

It in the N-terminal section; belongs to the transposase 2 family. The protein in the C-terminal section; belongs to the transposase 35 family.

Functionally, an RNA-guided dsDNA endonuclease. When guided by an RNA derived from the right-end element of its insertion sequence element (IS), cleaves DNA downstream of the transposon-associated motif (TAM). Cleaves supercoiled and linear DNA in a staggered manner 15-21 bases from the TAM yielding 5'-overhangs. Binds reRNA, an approximately 150 nucleotide base sRNA derived from the 3' end of its own gene, the right end (RE) of the insertion sequence (IS) plus sequence downstream of the IS. The chain is Putative RNA-guided DNA endonuclease from Streptomyces pristinaespiralis.